The sequence spans 400 residues: Nicotinate phosphoribosyltransferase (400 aa).

Phosphohistidine; by autocatalysis is present on H220.

The protein belongs to the NAPRTase family. In terms of processing, transiently phosphorylated on a His residue during the reaction cycle. Phosphorylation strongly increases the affinity for substrates and increases the rate of nicotinate D-ribonucleotide production. Dephosphorylation regenerates the low-affinity form of the enzyme, leading to product release.

The enzyme catalyses nicotinate + 5-phospho-alpha-D-ribose 1-diphosphate + ATP + H2O = nicotinate beta-D-ribonucleotide + ADP + phosphate + diphosphate. Its pathway is cofactor biosynthesis; NAD(+) biosynthesis; nicotinate D-ribonucleotide from nicotinate: step 1/1. In terms of biological role, catalyzes the synthesis of beta-nicotinate D-ribonucleotide from nicotinate and 5-phospho-D-ribose 1-phosphate at the expense of ATP. This Salmonella schwarzengrund (strain CVM19633) protein is Nicotinate phosphoribosyltransferase.